The sequence spans 64 residues: Large ribosomal subunit protein bL35 (64 aa).

The protein belongs to the bacterial ribosomal protein bL35 family.

The sequence is that of Large ribosomal subunit protein bL35 from Levilactobacillus brevis (strain ATCC 367 / BCRC 12310 / CIP 105137 / JCM 1170 / LMG 11437 / NCIMB 947 / NCTC 947) (Lactobacillus brevis).